The primary structure comprises 509 residues: Probable DNA ligase (509 aa).

Position 218 (aspartate 218) interacts with ATP. Lysine 220 serves as the catalytic N6-AMP-lysine intermediate. ATP contacts are provided by arginine 225, arginine 240, glutamate 269, phenylalanine 302, arginine 374, and lysine 380.

Belongs to the ATP-dependent DNA ligase family. Requires Mg(2+) as cofactor.

It carries out the reaction ATP + (deoxyribonucleotide)n-3'-hydroxyl + 5'-phospho-(deoxyribonucleotide)m = (deoxyribonucleotide)n+m + AMP + diphosphate.. Its function is as follows. DNA ligase that seals nicks in double-stranded DNA during DNA replication, DNA recombination and DNA repair. The polypeptide is Probable DNA ligase (Nocardioides sp. (strain ATCC BAA-499 / JS614)).